The chain runs to 453 residues: Allantoinase (453 aa).

Residues His59, His61, Lys146, His186, His242, and Asp315 each contribute to the Zn(2+) site. Lys146 carries the N6-carboxylysine modification.

The protein belongs to the metallo-dependent hydrolases superfamily. Allantoinase family. As to quaternary structure, homotetramer. It depends on Zn(2+) as a cofactor. Carboxylation allows a single lysine to coordinate two zinc ions.

The catalysed reaction is (S)-allantoin + H2O = allantoate + H(+). The protein operates within nitrogen metabolism; (S)-allantoin degradation; allantoate from (S)-allantoin: step 1/1. Functionally, catalyzes the conversion of allantoin (5-ureidohydantoin) to allantoic acid by hydrolytic cleavage of the five-member hydantoin ring. In Escherichia coli O139:H28 (strain E24377A / ETEC), this protein is Allantoinase.